Consider the following 968-residue polypeptide: RNA polymerase-associated protein RapA (968 aa).

Residues 164 to 334 (DVGRRHAPRV…FARLRLLDPN (171 aa)) form the Helicase ATP-binding domain. Residue 177–184 (DEVGLGKT) participates in ATP binding. A DEAH box motif is present at residues 280 to 283 (DEAH). Residues 490 to 662 (RVEWLMGYLT…YLASPDETEG (173 aa)) form the Helicase C-terminal domain.

The protein belongs to the SNF2/RAD54 helicase family. RapA subfamily. In terms of assembly, interacts with the RNAP. Has a higher affinity for the core RNAP than for the holoenzyme. Its ATPase activity is stimulated by binding to RNAP.

Its function is as follows. Transcription regulator that activates transcription by stimulating RNA polymerase (RNAP) recycling in case of stress conditions such as supercoiled DNA or high salt concentrations. Probably acts by releasing the RNAP, when it is trapped or immobilized on tightly supercoiled DNA. Does not activate transcription on linear DNA. Probably not involved in DNA repair. The sequence is that of RNA polymerase-associated protein RapA from Escherichia coli O81 (strain ED1a).